The sequence spans 411 residues: Serine/threonine-protein kinase 54 (411 aa).

A phosphoserine; by PHOT1 mark is found at Ser43 and Ser45. A Protein kinase domain is found at 108–385 (LIIKSVIARG…EEVVAMLEAI (278 aa)). ATP-binding positions include 114–122 (IARGTFGTV) and Lys135. The active-site Proton acceptor is the Asp253. Thr286 is subject to Phosphothreonine.

This sequence belongs to the protein kinase superfamily. Ser/Thr protein kinase family. In terms of assembly, binds to CBC2. Associates with PHOT2, BLUS1 and PM H(+)-ATPase (e.g. AHA1). In terms of processing, autophosphorylated. Phosphorylated in guard cells by HT1 in response to low CO(2) concentrations and by PHOT1 after blue light (BL) exposure. As to expression, expressed in guard cells.

It localises to the cytoplasm. It is found in the cytosol. The catalysed reaction is L-seryl-[protein] + ATP = O-phospho-L-seryl-[protein] + ADP + H(+). It carries out the reaction L-threonyl-[protein] + ATP = O-phospho-L-threonyl-[protein] + ADP + H(+). In terms of biological role, serine/threonine protein kinase that phosphorylates proteins on serine and threonine residues. Collectively with CBC2, acts as a negative regulator of stomatal opening, probably via the inhibition of plasma membrane-type ATPases (AHA1 and AHA2) activity in guard cells, but in an abscisic acid (ABA)-independent manner. However, at low concentrations of CO(2), together with CBC2, stimulates stomatal opening via the inhibition of S-type anion channels in response to blue light (BL) and red light (RL), thus being a key component to maximize photosynthesis in the light under low CO(2) conditions. Required for temperature decrease in leaves. Downstream target of HIGH LEAF TEMPERATURE1 (HT1) during low CO(2)-induced stomatal opening. Also functions in the signaling pathways of phototropins. The sequence is that of Serine/threonine-protein kinase 54 from Arabidopsis thaliana (Mouse-ear cress).